Reading from the N-terminus, the 206-residue chain is LexA repressor (206 aa).

Residues 28–48 (RAEIARRLGFKSANAAEEHLK) constitute a DNA-binding region (H-T-H motif). Active-site for autocatalytic cleavage activity residues include serine 123 and lysine 160.

This sequence belongs to the peptidase S24 family. In terms of assembly, homodimer.

It carries out the reaction Hydrolysis of Ala-|-Gly bond in repressor LexA.. Functionally, represses a number of genes involved in the response to DNA damage (SOS response), including recA and lexA. In the presence of single-stranded DNA, RecA interacts with LexA causing an autocatalytic cleavage which disrupts the DNA-binding part of LexA, leading to derepression of the SOS regulon and eventually DNA repair. This is LexA repressor from Shewanella pealeana (strain ATCC 700345 / ANG-SQ1).